The chain runs to 146 residues: Ribosome-binding factor A (146 aa).

Residues 122-134 (QQQFGSAEDVTSN) show a composition bias toward polar residues. The segment at 122-146 (QQQFGSAEDVTSNDIDEADDTEGKA) is disordered. The span at 135 to 146 (DIDEADDTEGKA) shows a compositional bias: acidic residues.

Belongs to the RbfA family. In terms of assembly, monomer. Binds 30S ribosomal subunits, but not 50S ribosomal subunits or 70S ribosomes.

It localises to the cytoplasm. In terms of biological role, one of several proteins that assist in the late maturation steps of the functional core of the 30S ribosomal subunit. Associates with free 30S ribosomal subunits (but not with 30S subunits that are part of 70S ribosomes or polysomes). Required for efficient processing of 16S rRNA. May interact with the 5'-terminal helix region of 16S rRNA. The protein is Ribosome-binding factor A of Shewanella sp. (strain ANA-3).